The chain runs to 242 residues: Probable transcriptional regulatory protein Cphy_2507 (242 aa).

This sequence belongs to the TACO1 family.

The protein localises to the cytoplasm. This Lachnoclostridium phytofermentans (strain ATCC 700394 / DSM 18823 / ISDg) (Clostridium phytofermentans) protein is Probable transcriptional regulatory protein Cphy_2507.